The sequence spans 166 residues: Monodehydroascorbate reductase, fruit isozyme (166 aa).

This sequence belongs to the FAD-dependent oxidoreductase family. It depends on FAD as a cofactor. Post-translationally, the N-terminus is blocked.

It catalyses the reaction 2 monodehydro-L-ascorbate radical + NADH + H(+) = 2 L-ascorbate + NAD(+). Functionally, catalyzes the conversion of monodehydroascorbate to ascorbate, oxidizing NADH in the process. The protein is Monodehydroascorbate reductase, fruit isozyme of Cucumis sativus (Cucumber).